The chain runs to 157 residues: Regulatory protein RecX (157 aa).

This sequence belongs to the RecX family.

It is found in the cytoplasm. In terms of biological role, modulates RecA activity. The sequence is that of Regulatory protein RecX from Leptothrix cholodnii (strain ATCC 51168 / LMG 8142 / SP-6) (Leptothrix discophora (strain SP-6)).